Reading from the N-terminus, the 84-residue chain is LKMGAMFVLLLLFTLASSHREGDIQARKTHLKSDFYRTLPRFARGCTISCGYEDNRCQGECHCPGKTNCYCTSGHHNKGCGCAC.

The signal sequence occupies residues 1–19 (LKMGAMFVLLLLFTLASSH). A propeptide spanning residues 20-44 (REGDIQARKTHLKSDFYRTLPRFAR) is cleaved from the precursor.

Belongs to the conotoxin S superfamily. Contains 5 disulfide bonds. In terms of tissue distribution, expressed by the venom duct.

It is found in the secreted. This is Conotoxin Tx8.1 from Conus textile (Cloth-of-gold cone).